The following is a 414-amino-acid chain: Clusterin-associated protein 1 (414 aa).

Residues 198–291 (KTKDLLNNVA…ERFEEAKNTL (94 aa)) adopt a coiled-coil conformation. Residues 305–414 (LLKSGSNDDS…EPLDESDNDF (110 aa)) are disordered. Composition is skewed to acidic residues over residues 312–328 (DDSD…DSEL) and 360–389 (DSDD…EDES). Phosphoserine occurs at positions 314, 324, and 326. Ser-410 bears the Phosphoserine mark.

The protein belongs to the CLUAP1 family. As to quaternary structure, interacts with CLU/clusterin. Interacts with UBXN10; the interaction is direct.

Its subcellular location is the cell projection. The protein localises to the cilium. It is found in the nucleus. In terms of biological role, required for cilia biogenesis. Appears to function within the multiple intraflagellar transport complex B (IFT-B). Key regulator of hedgehog signaling. The protein is Clusterin-associated protein 1 (CLUAP1) of Macaca fascicularis (Crab-eating macaque).